Consider the following 294-residue polypeptide: Nucleotide-binding protein A2cp1_0165 (294 aa).

Residue 17–24 (GVSGSGKS) coordinates ATP. Position 68–71 (68–71 (DARE)) interacts with GTP.

It belongs to the RapZ-like family.

Its function is as follows. Displays ATPase and GTPase activities. This is Nucleotide-binding protein A2cp1_0165 from Anaeromyxobacter dehalogenans (strain 2CP-1 / ATCC BAA-258).